The primary structure comprises 630 residues: uncharacterized protein (630 aa).

4 helical membrane passes run M254–V274, I504–I524, M564–F584, and I601–F621.

The protein localises to the cell membrane. This is an uncharacterized protein from Mycoplasma genitalium (strain ATCC 33530 / DSM 19775 / NCTC 10195 / G37) (Mycoplasmoides genitalium).